The following is a 369-amino-acid chain: L-lactate oxidase (369 aa).

The FMN hydroxy acid dehydrogenase domain occupies 13–369 (EKKLNVLNLD…KNAKLLNIRY (357 aa)). Residue tyrosine 39 coordinates pyruvate. FMN is bound by residues 92–94 (PAA), serine 121, and glutamine 143. Tyrosine 145 serves as a coordination point for pyruvate. Threonine 171 provides a ligand contact to FMN. Position 180 (arginine 180) interacts with pyruvate. FMN-binding residues include lysine 240 and serine 262. The pyruvate site is built by histidine 264 and arginine 267. Histidine 264 acts as the Proton acceptor in catalysis. FMN-binding positions include 295 to 299 (DSGIR) and arginine 319.

Belongs to the FMN-dependent alpha-hydroxy acid dehydrogenase family. In terms of assembly, homotetramer. FMN serves as cofactor.

The enzyme catalyses (S)-lactate + O2 = pyruvate + H2O2. Its function is as follows. Catalyzes the oxidation of (S)-lactate (L-lactate) to pyruvate, with a reduction of O2 to H2O2. May be involved in the utilization of L-lactate as an energy source for growth. The sequence is that of L-lactate oxidase from Lentilactobacillus hilgardii (strain ATCC 8290 / DSM 20176 / CCUG 30140 / JCM 1155 / KCTC 3500 / NBRC 15886 / NCIMB 8040 / NRRL B-1843 / 9).